The primary structure comprises 238 residues: Probable transcriptional regulatory protein SSP2054 (238 aa).

The protein belongs to the TACO1 family. YeeN subfamily.

Its subcellular location is the cytoplasm. This chain is Probable transcriptional regulatory protein SSP2054, found in Staphylococcus saprophyticus subsp. saprophyticus (strain ATCC 15305 / DSM 20229 / NCIMB 8711 / NCTC 7292 / S-41).